The chain runs to 102 residues: Large ribosomal subunit protein bL21 (102 aa).

It belongs to the bacterial ribosomal protein bL21 family. Part of the 50S ribosomal subunit. Contacts protein L20.

Functionally, this protein binds to 23S rRNA in the presence of protein L20. The sequence is that of Large ribosomal subunit protein bL21 from Bifidobacterium longum (strain DJO10A).